Here is a 215-residue protein sequence, read N- to C-terminus: Proteasome subunit beta inpE (215 aa).

This sequence belongs to the peptidase T1B family.

The protein resides in the cytoplasm. It is found in the nucleus. The enzyme catalyses Cleavage of peptide bonds with very broad specificity.. Functionally, proteasome subunit beta type-6; part of the inp gene cluster that mediates the biosynthesis of fellutamide B, a mycotoxin that acts as a proteasome inhibitor. In the first step of fellutabmide B biosynthesis inpC activates 3-hydroxydodecanoic acid to generate 3-hydroxydodecanoyl-AMP that is then loaded onto the T0 domain of inpB. The 3-hydroxydodecanoyl-S-phosphopantetheinyl-T0 is sequentially extended with L-Asn and L-Gln by the two CAT modules of inpB. The linear lipodipeptide from inpB is then transferred onto inpA for the addition of the third amino acid, L-Leu. Reductive releasing of the lipotripeptide by the TE domain of inpA produces (2S)-fellutamide B. InpF might be involved in the release and transfer of the lipodipeptide from inpB to inpA. The inp cluster-encoded proteasome subunit inpE confers resistance to internally produced fellutamides. The MFS efflux transporter inpD may contribute to fellutamide resistance as well. This Emericella nidulans (strain FGSC A4 / ATCC 38163 / CBS 112.46 / NRRL 194 / M139) (Aspergillus nidulans) protein is Proteasome subunit beta inpE (inpE).